The sequence spans 260 residues: Sulfoquinovose 1-dehydrogenase (260 aa).

Tyrosine 160 serves as the catalytic Proton acceptor.

The protein belongs to the short-chain dehydrogenases/reductases (SDR) family.

It carries out the reaction 6-sulfo-D-quinovose + NAD(+) = 6-deoxy-6-sulfo-D-glucono-1,5-lactone + NADH + H(+). Catalyzes the oxidation of sulfoquinovose to 6-deoxy-6-sulfo-D-glucono-1,5-lactone, with a strong preference for NAD(+) as the electron acceptor. Is involved in a degradation pathway of sulfoquinovose (SQ) that allows P.putida SQ1 to use SQ as the sole carbon and energy source for growth. The protein is Sulfoquinovose 1-dehydrogenase of Pseudomonas putida (Arthrobacter siderocapsulatus).